The sequence spans 251 residues: Putative cysteine-rich repeat secretory protein 36 (251 aa).

Residues 1–28 (MHSSYSLSKCLVCFTILAIQTLIRRVSS) form the signal peptide. Gnk2-homologous domains are found at residues 35–139 (YLNH…NSPP) and 144–248 (YENT…LYPF).

Belongs to the cysteine-rich repeat secretory protein family.

It localises to the secreted. This is Putative cysteine-rich repeat secretory protein 36 (CRRSP36) from Arabidopsis thaliana (Mouse-ear cress).